Consider the following 333-residue polypeptide: Ketol-acid reductoisomerase (NADP(+)) (333 aa).

Positions 2–182 (AKIYYDEDAS…GATRAGVIET (181 aa)) constitute a KARI N-terminal Rossmann domain. Residues 25–28 (YGSQ), Ser51, Ser53, and 83–86 (DTVQ) contribute to the NADP(+) site. Residue His108 is part of the active site. Gly134 serves as a coordination point for NADP(+). The region spanning 183-327 (TFKEETETDL…EELRKMMPWL (145 aa)) is the KARI C-terminal knotted domain. Residues Asp191, Glu195, Glu227, and Glu231 each contribute to the Mg(2+) site. Ser252 is a substrate binding site.

It belongs to the ketol-acid reductoisomerase family. Mg(2+) serves as cofactor.

The enzyme catalyses (2R)-2,3-dihydroxy-3-methylbutanoate + NADP(+) = (2S)-2-acetolactate + NADPH + H(+). It catalyses the reaction (2R,3R)-2,3-dihydroxy-3-methylpentanoate + NADP(+) = (S)-2-ethyl-2-hydroxy-3-oxobutanoate + NADPH + H(+). It functions in the pathway amino-acid biosynthesis; L-isoleucine biosynthesis; L-isoleucine from 2-oxobutanoate: step 2/4. It participates in amino-acid biosynthesis; L-valine biosynthesis; L-valine from pyruvate: step 2/4. Functionally, involved in the biosynthesis of branched-chain amino acids (BCAA). Catalyzes an alkyl-migration followed by a ketol-acid reduction of (S)-2-acetolactate (S2AL) to yield (R)-2,3-dihydroxy-isovalerate. In the isomerase reaction, S2AL is rearranged via a Mg-dependent methyl migration to produce 3-hydroxy-3-methyl-2-ketobutyrate (HMKB). In the reductase reaction, this 2-ketoacid undergoes a metal-dependent reduction by NADPH to yield (R)-2,3-dihydroxy-isovalerate. This Aquifex aeolicus (strain VF5) protein is Ketol-acid reductoisomerase (NADP(+)).